We begin with the raw amino-acid sequence, 163 residues long: Probable chemoreceptor glutamine deamidase CheD (163 aa).

Belongs to the CheD family.

It catalyses the reaction L-glutaminyl-[protein] + H2O = L-glutamyl-[protein] + NH4(+). Its function is as follows. Probably deamidates glutamine residues to glutamate on methyl-accepting chemotaxis receptors (MCPs), playing an important role in chemotaxis. This is Probable chemoreceptor glutamine deamidase CheD from Borreliella afzelii (strain PKo) (Borrelia afzelii).